We begin with the raw amino-acid sequence, 321 residues long: Aspartate carbamoyltransferase catalytic subunit (321 aa).

Carbamoyl phosphate is bound by residues R65 and T66. K93 contacts L-aspartate. Carbamoyl phosphate-binding residues include R115, H143, and Q146. Residues R176 and R230 each contribute to the L-aspartate site. Carbamoyl phosphate is bound by residues G271 and P272.

The protein belongs to the aspartate/ornithine carbamoyltransferase superfamily. ATCase family. Heterododecamer (2C3:3R2) of six catalytic PyrB chains organized as two trimers (C3), and six regulatory PyrI chains organized as three dimers (R2).

It catalyses the reaction carbamoyl phosphate + L-aspartate = N-carbamoyl-L-aspartate + phosphate + H(+). Its pathway is pyrimidine metabolism; UMP biosynthesis via de novo pathway; (S)-dihydroorotate from bicarbonate: step 2/3. Functionally, catalyzes the condensation of carbamoyl phosphate and aspartate to form carbamoyl aspartate and inorganic phosphate, the committed step in the de novo pyrimidine nucleotide biosynthesis pathway. In Bartonella bacilliformis (strain ATCC 35685 / KC583 / Herrer 020/F12,63), this protein is Aspartate carbamoyltransferase catalytic subunit.